The following is an 804-amino-acid chain: Protein SEY1 homolog 1 (804 aa).

Residues 1-638 lie on the Cytoplasmic side of the membrane; the sequence is MEQIITGEGQ…SVLASQNNEH (638 aa). The region spanning 28-245 is the GB1/RHD3-type G domain; the sequence is GTDYHMVSII…EENYLFKEKS (218 aa). 38-45 is a GTP binding site; that stretch reads GCQSSGKS. A helical transmembrane segment spans residues 639–659; that stretch reads IPPWAWFLFLFSCSDYILWWL. Over 660-662 the chain is Lumenal; that stretch reads SNP. Residues 663-683 form a helical membrane-spanning segment; the sequence is LLFSLTVLFGGTYLVLNQLGL. Topologically, residues 684 to 804 are cytoplasmic; sequence WDTAVQKLLD…RKRVRVGTLV (121 aa). Residues 706 to 804 form a disordered region; sequence PDENNETETN…RKRVRVGTLV (99 aa). Polar residues predominate over residues 751 to 791; sequence QGLTKTESNVTFANVSNANDEQSLTKNNTEDSLNTGSSSSG. A compositionally biased stretch (basic residues) spans 792 to 804; the sequence is QRHRKRVRVGTLV.

The protein belongs to the TRAFAC class dynamin-like GTPase superfamily. GB1/RHD3 GTPase family. RHD3 subfamily.

The protein resides in the endoplasmic reticulum membrane. Its function is as follows. Probable GTP-binding protein that may be involved in cell development. This is Protein SEY1 homolog 1 from Trichomonas vaginalis (strain ATCC PRA-98 / G3).